The chain runs to 335 residues: MASPRWLWCVCATAAVTLLLVSKVPSASAQRKKEKVLVEKVIQLMEWTNQRPVIRMNGDKFRPLVKAPPRNYSVIVMFTALQLHRQCVVCKQADEEFQILANFWRYSSAFTNRIFFAMVDFDEGSDVFQMLNMNSAPTFINFPPKGKPKRADTYELQVRGFSAEQIARWIADRTDVNIRVIRPPNYAGPLMLGLLLAVIGGLVYLRRSNMEFLFNKTGWAFAALCFVLAMTSGQMWNHIRGPPYAHKNPHTGHVNYIHGSSQAQFVAETHIVLLFNGGVTLGMVLLCEAAASDMDIGKRRMMCIAGIGLVVLFFSWMLSIFRSKYHGYPYSFLMS.

The first 29 residues, 1 to 29, serve as a signal peptide directing secretion; sequence MASPRWLWCVCATAAVTLLLVSKVPSASA. The Extracellular segment spans residues 30–184; that stretch reads QRKKEKVLVE…DVNIRVIRPP (155 aa). A Thioredoxin domain is found at 47 to 175; it reads WTNQRPVIRM…IARWIADRTD (129 aa). A glycan (N-linked (GlcNAc...) asparagine) is linked at N71. C87 and C90 form a disulfide bridge. The helical transmembrane segment at 185–205 threads the bilayer; that stretch reads NYAGPLMLGLLLAVIGGLVYL. The Cytoplasmic portion of the chain corresponds to 206–209; that stretch reads RRSN. Residues 210–230 form a helical membrane-spanning segment; that stretch reads MEFLFNKTGWAFAALCFVLAM. Residues 231–270 lie on the Extracellular side of the membrane; it reads TSGQMWNHIRGPPYAHKNPHTGHVNYIHGSSQAQFVAETH. Residues 271-291 form a helical membrane-spanning segment; the sequence is IVLLFNGGVTLGMVLLCEAAA. Residues 292–300 are Cytoplasmic-facing; sequence SDMDIGKRR. A helical membrane pass occupies residues 301–321; it reads MMCIAGIGLVVLFFSWMLSIF. Residues 322-335 lie on the Extracellular side of the membrane; that stretch reads RSKYHGYPYSFLMS.

This sequence belongs to the OST3/OST6 family. In terms of assembly, accessory component of the STT3B-containing form of the oligosaccharyltransferase (OST) complex. OST exists in two different complex forms which contain common core subunits RPN1, RPN2, OST48, OST4, DAD1 and TMEM258, either STT3A or STT3B as catalytic subunits, and form-specific accessory subunits. OST can form stable complexes with the Sec61 complex or with both the Sec61 and TRAP complexes. The association of TUSC3 or MAGT1 with the STT3B-containing complex seems to be mutually exclusvice.

Its subcellular location is the cell membrane. The protein resides in the endoplasmic reticulum. It localises to the endoplasmic reticulum membrane. The protein operates within protein modification; protein glycosylation. In terms of biological role, accessory component of the STT3B-containing form of the N-oligosaccharyl transferase (OST) complex which catalyzes the transfer of a high mannose oligosaccharide from a lipid-linked oligosaccharide donor to an asparagine residue within an Asn-X-Ser/Thr consensus motif in nascent polypeptide chains. Involved in N-glycosylation of STT3B-dependent substrates. Specifically required for the glycosylation of a subset of acceptor sites that are near cysteine residues; in this function seems to act redundantly with TUSC3. In its oxidized form proposed to form transient mixed disulfides with a glycoprotein substrate to facilitate access of STT3B to the unmodified acceptor site. Also has oxidoreductase-independent functions in the STT3B-containing OST complex possibly involving substrate recognition. Could indirectly play a role in Mg(2+) transport in epithelial cells. This chain is Dolichyl-diphosphooligosaccharide--protein glycosyltransferase subunit MAGT1, found in Rattus norvegicus (Rat).